A 522-amino-acid polypeptide reads, in one-letter code: Peptide chain release factor 3 (522 aa).

Positions Lys-9 to Gln-276 constitute a tr-type G domain. Residues Ser-18 to Thr-25, Asp-86 to His-90, and Asn-140 to Asp-143 contribute to the GTP site.

This sequence belongs to the TRAFAC class translation factor GTPase superfamily. Classic translation factor GTPase family. PrfC subfamily.

The protein localises to the cytoplasm. In terms of biological role, increases the formation of ribosomal termination complexes and stimulates activities of RF-1 and RF-2. It binds guanine nucleotides and has strong preference for UGA stop codons. It may interact directly with the ribosome. The stimulation of RF-1 and RF-2 is significantly reduced by GTP and GDP, but not by GMP. This is Peptide chain release factor 3 from Lactobacillus johnsonii (strain CNCM I-12250 / La1 / NCC 533).